A 1232-amino-acid polypeptide reads, in one-letter code: Anion exchange protein 3 (1232 aa).

A compositionally biased stretch (pro residues) spans 1–11; it reads MANGVIPPPGG. Disordered stretches follow at residues 1–316 and 429–499; these read MANG…KLDR and NDDK…DSHR. Residues 1 to 708 are Cytoplasmic-facing; the sequence is MANGVIPPPG…DLRDALHSQC (708 aa). Positions 58–75 are enriched in basic and acidic residues; sequence DPEKPSRSYSERDFEFHR. 2 stretches are compositionally biased toward basic residues: residues 76 to 97 and 104 to 113; these read HTSHHTHHPLSARLPPPHKLRR and RHTRRKRKKE. The span at 134 to 152 shows a compositional bias: acidic residues; it reads VDEEEEEEEEEEGESEAEP. Ser-167, Ser-170, Ser-175, and Ser-198 each carry phosphoserine. Residues 267-279 are compositionally biased toward basic and acidic residues; sequence DDMKSHRLEDNPG. Residues 280 to 289 are compositionally biased toward basic residues; sequence VRRHLVKKPS. The residue at position 295 (Arg-295) is an Omega-N-methylarginine. The span at 305 to 316 shows a compositional bias: basic residues; it reads LRRKKKKKKLDR. The span at 440-450 shows a compositional bias: polar residues; sequence NPSSSSMNSVL. Over residues 481–499 the composition is skewed to basic and acidic residues; it reads HDPDAKEKPLHMPGGDSHR. Helical transmembrane passes span 709-731, 737-774, 794-816, 826-847, and 893-910; these read VAAVLFIYFAALSPAITFGGLLG, LMGVSELIVSTAVLGVLFSLLGAQPLLVVGFSGPLLVF, VWVGLWLVVFVLALVAAEGSFLV, IFAFLISLIFIYETFYKLYKVF, and ALLSLILMLGTFFIAFFL. The membrane (anion exchange) stretch occupies residues 709 to 1232; it reads VAAVLFIYFA…DEYNELHMPV (524 aa). Residues 911 to 925 are Cytoplasmic-facing; the sequence is RKFRNSRFLGGKARR. 5 helical membrane-spanning segments follow: residues 926-946, 980-1002, 1028-1049, 1083-1128, and 1155-1191; these read IIGDFGIPISILVMVLVDYSI, PFPPWMMVAAAVPALLVLILIFM, LLLIGSLGGLCGLFGLPWLTAA, VTGV…IQLS, and MHLFTCIQLGCIALLWVVKSTAASLAFPFLLLLTVPL. Residue Cys-1165 is the site of S-palmitoyl cysteine attachment.

Belongs to the anion exchanger (TC 2.A.31) family.

It is found in the cell membrane. It catalyses the reaction hydrogencarbonate(in) + chloride(out) = hydrogencarbonate(out) + chloride(in). Sodium-independent anion exchanger which mediates the electroneutral exchange of chloride for bicarbonate ions across the cell membrane. May be involved in the regulation of intracellular pH, and the modulation of cardiac action potential. The sequence is that of Anion exchange protein 3 (SLC4A3) from Plecturocebus moloch (Dusky titi monkey).